We begin with the raw amino-acid sequence, 526 residues long: GMP synthase [glutamine-hydrolyzing] (526 aa).

Positions 3 to 199 (KVAIIDFGSQ…FIKIAGCKTD (197 aa)) constitute a Glutamine amidotransferase type-1 domain. The Nucleophile role is filled by cysteine 83. Active-site residues include histidine 174 and glutamate 176. One can recognise a GMPS ATP-PPase domain in the interval 200 to 392 (WTMNSFLDEQ…LGISDEILMR (193 aa)). Position 227 to 233 (227 to 233 (SGGVDSS)) interacts with ATP.

Homodimer.

The enzyme catalyses XMP + L-glutamine + ATP + H2O = GMP + L-glutamate + AMP + diphosphate + 2 H(+). It functions in the pathway purine metabolism; GMP biosynthesis; GMP from XMP (L-Gln route): step 1/1. In terms of biological role, catalyzes the synthesis of GMP from XMP. In Ehrlichia canis (strain Jake), this protein is GMP synthase [glutamine-hydrolyzing].